The sequence spans 339 residues: tRNA dimethylallyltransferase (339 aa).

36-43 (GPTGSGKT) is a binding site for ATP. Residue 38-43 (TGSGKT) participates in substrate binding. The tract at residues 61 to 64 (DSMQ) is interaction with substrate tRNA.

Belongs to the IPP transferase family. Monomer. Mg(2+) is required as a cofactor.

The enzyme catalyses adenosine(37) in tRNA + dimethylallyl diphosphate = N(6)-dimethylallyladenosine(37) in tRNA + diphosphate. Catalyzes the transfer of a dimethylallyl group onto the adenine at position 37 in tRNAs that read codons beginning with uridine, leading to the formation of N6-(dimethylallyl)adenosine (i(6)A). The polypeptide is tRNA dimethylallyltransferase (Chlamydia trachomatis serovar A (strain ATCC VR-571B / DSM 19440 / HAR-13)).